We begin with the raw amino-acid sequence, 764 residues long: Polyribonucleotide nucleotidyltransferase (764 aa).

Positions 541 and 547 each coordinate Mg(2+). In terms of domain architecture, KH spans 607 to 666; the sequence is PRVTAIKIPVDKIGEVIGPKGKVINQITEDTGANISIEDDGTVFVGATDGPSAQAAIDAI. Positions 678 to 747 constitute an S1 motif domain; it reads GERFLGTVVK…NRGKISLVPV (70 aa).

It belongs to the polyribonucleotide nucleotidyltransferase family. Requires Mg(2+) as cofactor.

Its subcellular location is the cytoplasm. It catalyses the reaction RNA(n+1) + phosphate = RNA(n) + a ribonucleoside 5'-diphosphate. Involved in mRNA degradation. Catalyzes the phosphorolysis of single-stranded polyribonucleotides processively in the 3'- to 5'-direction. This chain is Polyribonucleotide nucleotidyltransferase, found in Nocardia farcinica (strain IFM 10152).